A 74-amino-acid polypeptide reads, in one-letter code: Mitotic-spindle organizing protein 1 (74 aa).

This sequence belongs to the MOZART1 family. Part of the gamma-tubulin complex.

The protein localises to the cytoplasm. It localises to the cytoskeleton. The protein resides in the microtubule organizing center. It is found in the spindle pole body. Functionally, required for gamma-tubulin complex recruitment to the microtubule organizing center (MTOC). The chain is Mitotic-spindle organizing protein 1 from Emericella nidulans (strain FGSC A4 / ATCC 38163 / CBS 112.46 / NRRL 194 / M139) (Aspergillus nidulans).